Here is a 153-residue protein sequence, read N- to C-terminus: Ergochrome gene cluster protein CPUR_05425 (153 aa).

It participates in pigment biosynthesis. In terms of biological role, part of the ergochrome gene cluster responsible for the typical purple-black color of the ergot sclerotia. The ergochrome gene cluster produces several ergot pigments including the yellow ergochrome secalonic acid and its derivatives, as well as the red anthraquinones endocrocin and clavorubin. The pathway begins with the synthesis of atrochrysone thioester by the polyketide synthase (PKS) CPUR_05437. The atrochrysone carboxyl ACP thioesterase CPUR_05436 then breaks the thioester bond and releases the atrochrysone carboxylic acid from CPUR_05437. The atrochrysone carboxylic acid is then converted to atrochrysone which is further transformed into emodin anthrone. The next step is performed by the anthrone oxygenase CPUR_05434 that catalyzes the oxidation of emodinanthrone to emodin. Emodin is further modified to yield monodictyphenone via several steps involving CPUR_05427, CPUR_05428, CPUR_05429 and CPUR_05430. The short chain dehydrogenase/reductase CPUR_05418 then catalyzes the C-5 ketoreduction to give the xanthone skeleton of the monomeric units. Ergochromes formation requires further dimerization steps of different xanthone units, probably catalyzed by the cytochrome P450 monooxygenase CPUR_05419. CPUR_05425, CPUR_05426 and CPUR_05431 are unique to Claviceps, thus it is likely that they are involved in further modification of xanthone units or in their dimerization. The yellow ergochromes and the red anthraquinone pigments endocrocin and clavorubin are products from the same PKS derived precursors and the latter are likely shunt products in the pathway of xanthone biosynthesis. It is proposed that atrochrysone carboxylic acid released from the PKS CPUR_05437 can also be converted to endocrocin anthrone which is further oxidized into endocrocin by CPUR_05435. Endocrocin could be then modified to clavorubin, possibly by CPUR_05423 and CPUR_05431. Clavorubin is the principal anthraquinone metabolite produced by the cluster with a much higher yield compared to endocrocin. In Claviceps purpurea (strain 20.1) (Ergot fungus), this protein is Ergochrome gene cluster protein CPUR_05425.